Consider the following 249-residue polypeptide: Phosphoribosylaminoimidazole-succinocarboxamide synthase (249 aa).

This sequence belongs to the SAICAR synthetase family.

The enzyme catalyses 5-amino-1-(5-phospho-D-ribosyl)imidazole-4-carboxylate + L-aspartate + ATP = (2S)-2-[5-amino-1-(5-phospho-beta-D-ribosyl)imidazole-4-carboxamido]succinate + ADP + phosphate + 2 H(+). It functions in the pathway purine metabolism; IMP biosynthesis via de novo pathway; 5-amino-1-(5-phospho-D-ribosyl)imidazole-4-carboxamide from 5-amino-1-(5-phospho-D-ribosyl)imidazole-4-carboxylate: step 1/2. This is Phosphoribosylaminoimidazole-succinocarboxamide synthase from Roseiflexus sp. (strain RS-1).